Consider the following 163-residue polypeptide: Keratin-associated protein 11-1 (163 aa).

4 consecutive repeat copies span residues 111–120 (CQPLGGISSV), 121–130 (CQPVGGISTV), 131–140 (CQPVGGVSTV), and 141–150 (CQPACGVSRT). The segment at 111–150 (CQPLGGISSVCQPVGGISTVCQPVGGVSTVCQPACGVSRT) is 4 X 10 AA approximate repeats.

The protein belongs to the PMG family. As to expression, expressed in the upper matrix and in the entire hair cortex.

In the hair cortex, hair keratin intermediate filaments are embedded in an interfilamentous matrix, consisting of hair keratin-associated proteins (KRTAP), which are essential for the formation of a rigid and resistant hair shaft through their extensive disulfide bond cross-linking with abundant cysteine residues of hair keratins. The matrix proteins include the high-sulfur and high-glycine-tyrosine keratins. The chain is Keratin-associated protein 11-1 (KRTAP11-1) from Homo sapiens (Human).